The chain runs to 1067 residues: SURP and G-patch domain-containing protein 2 (1067 aa).

Ser93 carries the phosphoserine modification. A compositionally biased stretch (basic and acidic residues) spans 177–189; the sequence is KESRDYDLDHPGE. Residues 177 to 199 form a disordered region; it reads KESRDYDLDHPGEVDSVSRSSGQ. Position 206 is a phosphoserine (Ser206). Lys219 participates in a covalent cross-link: Glycyl lysine isopeptide (Lys-Gly) (interchain with G-Cter in SUMO2). Residue Thr265 is modified to Phosphothreonine. 2 positions are modified to phosphoserine: Ser267 and Ser586. One copy of the SURP motif 1 repeat lies at 573–616; the sequence is IDQLVMRVIQGRLSPRERTLLLQDPAYWFLSDESSLEYKYYKLK. A disordered region spans residues 668–767; that stretch reads SQGPRGLKAK…CPSANMDAKT (100 aa). Over residues 680–691 the composition is skewed to polar residues; the sequence is TTAQQTSLSSGT. At Ser740 the chain carries Phosphoserine. Thr744 bears the Phosphothreonine mark. The SURP motif 2 repeat unit spans residues 770–813; the sequence is TAEKLARFVAQVGPEIEQFSIENSTDNPDLWFLHDQSSSAFKFY. A compositionally biased stretch (polar residues) spans 825-840; sequence SFQSTGEAGDSVQSPT. Disordered regions lie at residues 825–944 and 967–991; these read SFQS…KSLK and RIAYDRPRGRPIAKKKKPKDMEFSQ. Position 838 is a phosphoserine (Ser838). Residues 843–856 are compositionally biased toward basic and acidic residues; the sequence is KEGKGEPQEGHPEQ. The segment covering 866–883 has biased composition (acidic residues); the sequence is LPEEEEEDEEESEDEGGE. Positions 919–931 are enriched in polar residues; it reads ASTPGLSQASSGS. Basic residues predominate over residues 975-984; sequence GRPIAKKKKP. Positions 980 to 985 match the Nuclear localization signal motif; the sequence is KKKKPK. The G-patch domain occupies 996-1042; that stretch reads DKNVGFQMLQKMGWKEGHGLGSLGKGIREPVSVGALSEGEGLGADGP.

It is found in the nucleus. Functionally, may play a role in mRNA splicing. In Mus musculus (Mouse), this protein is SURP and G-patch domain-containing protein 2 (Sugp2).